A 130-amino-acid polypeptide reads, in one-letter code: Small ribosomal subunit protein uS9 (130 aa).

Belongs to the universal ribosomal protein uS9 family.

This is Small ribosomal subunit protein uS9 from Colwellia psychrerythraea (strain 34H / ATCC BAA-681) (Vibrio psychroerythus).